The following is a 341-amino-acid chain: L-sulfolactate dehydrogenase (341 aa).

This sequence belongs to the LDH2/MDH2 oxidoreductase family.

Its subcellular location is the cytoplasm. It carries out the reaction a (2S)-2-hydroxycarboxylate + NAD(+) = a 2-oxocarboxylate + NADH + H(+). The protein operates within cofactor biosynthesis; coenzyme M biosynthesis; sulfoacetaldehyde from phosphoenolpyruvate and sulfite: step 3/4. It functions in the pathway cofactor biosynthesis; 5,6,7,8-tetrahydromethanopterin biosynthesis. In terms of biological role, catalyzes the reduction of sulfopyruvate to (R)-sulfolactate. Involved in the biosynthesis of both coenzyme M (with (R)-sulfolactate) and methanopterin (with alpha-ketoglutarate). In Methanothermobacter thermautotrophicus (strain ATCC 29096 / DSM 1053 / JCM 10044 / NBRC 100330 / Delta H) (Methanobacterium thermoautotrophicum), this protein is L-sulfolactate dehydrogenase (comC).